Here is a 262-residue protein sequence, read N- to C-terminus: Acyl-[acyl-carrier-protein]--UDP-N-acetylglucosamine O-acyltransferase (262 aa).

Belongs to the transferase hexapeptide repeat family. LpxA subfamily. In terms of assembly, homotrimer.

The protein localises to the cytoplasm. The catalysed reaction is a (3R)-hydroxyacyl-[ACP] + UDP-N-acetyl-alpha-D-glucosamine = a UDP-3-O-[(3R)-3-hydroxyacyl]-N-acetyl-alpha-D-glucosamine + holo-[ACP]. It participates in glycolipid biosynthesis; lipid IV(A) biosynthesis; lipid IV(A) from (3R)-3-hydroxytetradecanoyl-[acyl-carrier-protein] and UDP-N-acetyl-alpha-D-glucosamine: step 1/6. Involved in the biosynthesis of lipid A, a phosphorylated glycolipid that anchors the lipopolysaccharide to the outer membrane of the cell. This Shigella flexneri serotype 5b (strain 8401) protein is Acyl-[acyl-carrier-protein]--UDP-N-acetylglucosamine O-acyltransferase.